The primary structure comprises 195 residues: Probable GTP-binding protein EngB (195 aa).

Residues 24-195 enclose the EngB-type G domain; sequence GLSEVGLSGR…QIWNVIEKYL (172 aa). Residues 32–39, 59–63, 77–80, 144–147, and 176–178 each bind GTP; these read GRSNVGKS, GKTQT, DVPG, TKED, and YSS. Positions 39 and 61 each coordinate Mg(2+).

It belongs to the TRAFAC class TrmE-Era-EngA-EngB-Septin-like GTPase superfamily. EngB GTPase family. Mg(2+) is required as a cofactor.

In terms of biological role, necessary for normal cell division and for the maintenance of normal septation. The protein is Probable GTP-binding protein EngB of Staphylococcus saprophyticus subsp. saprophyticus (strain ATCC 15305 / DSM 20229 / NCIMB 8711 / NCTC 7292 / S-41).